The primary structure comprises 448 residues: Squalene synthase ERG9 (448 aa).

The helical transmembrane segment at 428–448 threads the bilayer; the sequence is CNVVLFGIGALILSLIYFVLY.

Belongs to the phytoene/squalene synthase family. Mg(2+) is required as a cofactor.

The protein localises to the endoplasmic reticulum membrane. It is found in the microsome. The catalysed reaction is 2 (2E,6E)-farnesyl diphosphate + NADPH + H(+) = squalene + 2 diphosphate + NADP(+). It carries out the reaction 2 (2E,6E)-farnesyl diphosphate + NADH + H(+) = squalene + 2 diphosphate + NAD(+). It participates in terpene metabolism; lanosterol biosynthesis; lanosterol from farnesyl diphosphate: step 1/3. Functionally, squalene synthase; part of the third module of ergosterol biosynthesis pathway that includes the late steps of the pathway. ERG9 produces squalene from 2 farnesyl pyrophosphate moieties. The third module or late pathway involves the ergosterol synthesis itself through consecutive reactions that mainly occur in the endoplasmic reticulum (ER) membrane. Firstly, the squalene synthase ERG9 catalyzes the condensation of 2 farnesyl pyrophosphate moieties to form squalene, which is the precursor of all steroids. Squalene synthase is crucial for balancing the incorporation of farnesyl diphosphate (FPP) into sterol and nonsterol isoprene synthesis. Secondly, the squalene epoxidase ERG1 catalyzes the stereospecific oxidation of squalene to (S)-2,3-epoxysqualene, which is considered to be a rate-limiting enzyme in steroid biosynthesis. Then, the lanosterol synthase ERG7 catalyzes the cyclization of (S)-2,3 oxidosqualene to lanosterol, a reaction that forms the sterol core. In the next steps, lanosterol is transformed to zymosterol through a complex process involving various demethylation, reduction and desaturation reactions. The lanosterol 14-alpha-demethylase ERG11 (also known as CYP51) catalyzes C14-demethylation of lanosterol to produce 4,4'-dimethyl cholesta-8,14,24-triene-3-beta-ol, which is critical for ergosterol biosynthesis. The C-14 reductase ERG24 reduces the C14=C15 double bond of 4,4-dimethyl-cholesta-8,14,24-trienol to produce 4,4-dimethyl-cholesta-8,24-dienol. 4,4-dimethyl-cholesta-8,24-dienol is substrate of the C-4 demethylation complex ERG25-ERG26-ERG27 in which ERG25 catalyzes the three-step monooxygenation required for the demethylation of 4,4-dimethyl and 4alpha-methylsterols, ERG26 catalyzes the oxidative decarboxylation that results in a reduction of the 3-beta-hydroxy group at the C-3 carbon to an oxo group, and ERG27 is responsible for the reduction of the keto group on the C-3. ERG28 has a role as a scaffold to help anchor ERG25, ERG26 and ERG27 to the endoplasmic reticulum and ERG29 regulates the activity of the iron-containing C4-methylsterol oxidase ERG25. Then, the sterol 24-C-methyltransferase ERG6 catalyzes the methyl transfer from S-adenosyl-methionine to the C-24 of zymosterol to form fecosterol. The C-8 sterol isomerase ERG2 catalyzes the reaction which results in unsaturation at C-7 in the B ring of sterols and thus converts fecosterol to episterol. The sterol-C5-desaturase ERG3 then catalyzes the introduction of a C-5 double bond in the B ring to produce 5-dehydroepisterol. The C-22 sterol desaturase ERG5 further converts 5-dehydroepisterol into ergosta-5,7,22,24(28)-tetraen-3beta-ol by forming the C-22(23) double bond in the sterol side chain. Finally, ergosta-5,7,22,24(28)-tetraen-3beta-ol is substrate of the C-24(28) sterol reductase ERG4 to produce ergosterol. The protein is Squalene synthase ERG9 of Candida albicans (strain SC5314 / ATCC MYA-2876) (Yeast).